Here is a 310-residue protein sequence, read N- to C-terminus: Homoserine kinase (310 aa).

91–101 (PIGSGLGSSAC) is a binding site for ATP.

It belongs to the GHMP kinase family. Homoserine kinase subfamily.

It localises to the cytoplasm. It catalyses the reaction L-homoserine + ATP = O-phospho-L-homoserine + ADP + H(+). The protein operates within amino-acid biosynthesis; L-threonine biosynthesis; L-threonine from L-aspartate: step 4/5. Catalyzes the ATP-dependent phosphorylation of L-homoserine to L-homoserine phosphate. The protein is Homoserine kinase of Escherichia coli O157:H7.